A 280-amino-acid polypeptide reads, in one-letter code: P32 adhesin (280 aa).

Transmembrane regions (helical) follow at residues 13–37 (FIVLALLFTTILIVSLSLLAFALVV) and 68–92 (WFIPTVAGSFGFSALAIILGLAIGL). Positions 114 to 128 (EQLQRISDQQEQQTV) are enriched in polar residues. Disordered regions lie at residues 114–149 (EQLQRISDQQEQQTVEIDPQQSQAQPSQPQVQQPLQ) and 163–280 (FNPN…GLKP). 2 stretches are compositionally biased toward low complexity: residues 132-149 (PQQSQAQPSQPQVQQPLQ) and 168-188 (QQRPGFNQPNQQFQPHNNFNP). A run of 13 repeats spans residues 163 to 168 (FNPNMQ), 170 to 174 (RPGFN), 186 to 190 (FNPRM), 191 to 195 (NPNMQ), 196 to 200 (RPGFN), 199 to 204 (FNPNMQ), 206 to 210 (RPGFN), 222 to 226 (FNPRM), 227 to 231 (NPNMQ), 232 to 236 (RPGFN), 249 to 254 (FNPNMQ), 256 to 260 (RPGFN), and 259 to 264 (FNPNMQ). The 6 X 5 AA repeats of [FM]-N-P-N-M-Q stretch occupies residues 163–264 (FNPNMQQRPG…QRPGFNPNMQ (102 aa)). Residues 170–260 (RPGFNQPNQQ…PNMQQRPGFN (91 aa)) form a 5 X 5 AA repeats of R-P-G-F-N region. Residues 186-226 (FNPRMNPNMQRPGFNPNMQQRPGFNQPNQQFQPHNNFNPRM) form a 2 X 5 AA repeats of F-N-P-R-M region. The span at 204–224 (QQRPGFNQPNQQFQPHNNFNP) shows a compositional bias: low complexity. Residues 235–257 (FNQPHPNQFAQPNNFNPNMQQRP) are compositionally biased toward low complexity. The span at 261–271 (PNMQQRPNPSQ) shows a compositional bias: polar residues.

It localises to the cell projection. It is found in the attachment organelle membrane. Its function is as follows. Adhesin necessary for successful cytadherence and virulence. The protein is P32 adhesin of Mycoplasma genitalium (strain ATCC 33530 / DSM 19775 / NCTC 10195 / G37) (Mycoplasmoides genitalium).